The chain runs to 364 residues: Tyrosine-protein phosphatase YVH1 (364 aa).

The Tyrosine-protein phosphatase domain maps to 11–173 (EVTRILGGIY…LHLFEKMGGD (163 aa)). Catalysis depends on Cys-117, which acts as the Phosphocysteine intermediate. Position 196 is a phosphoserine (Ser-196).

The protein belongs to the protein-tyrosine phosphatase family. Non-receptor class dual specificity subfamily.

The enzyme catalyses O-phospho-L-tyrosyl-[protein] + H2O = L-tyrosyl-[protein] + phosphate. Functionally, may be directly involved in signal transduction and/or cell cycle regulation. It is necessary for maintaining growth rate or spore germination. Could show both activity toward tyrosine-protein phosphate as well as with serine-protein phosphate. This is Tyrosine-protein phosphatase YVH1 (YVH1) from Saccharomyces cerevisiae (strain ATCC 204508 / S288c) (Baker's yeast).